Here is a 513-residue protein sequence, read N- to C-terminus: Putative thymidine phosphorylase (513 aa).

It belongs to the thymidine/pyrimidine-nucleoside phosphorylase family. Type 2 subfamily.

The catalysed reaction is thymidine + phosphate = 2-deoxy-alpha-D-ribose 1-phosphate + thymine. The chain is Putative thymidine phosphorylase from Rhodopseudomonas palustris (strain BisA53).